The primary structure comprises 174 residues: Inactive signal peptidase IA (174 aa).

The Cytoplasmic portion of the chain corresponds to 1 to 7; it reads MKKVVKY. The chain crosses the membrane as a helical span at residues 8-28; the sequence is LISLILAIIIVLFVQTFVIVG. At 29-174 the chain is on the extracellular side; it reads HVIPNNDMSP…FSKWTVQFKS (146 aa).

It belongs to the peptidase S26 family.

It localises to the cell membrane. Functionally, catalytically inactive. This is Inactive signal peptidase IA (spsA) from Staphylococcus aureus (strain COL).